Reading from the N-terminus, the 594-residue chain is Golgi-associated RAB2 interactor protein 4 (594 aa).

Residues 390–525 (AAGLPVSTRQ…SSGSSKRLGR (136 aa)) form a disordered region. The segment covering 396–406 (STRQSKSSLSG) has biased composition (polar residues). Composition is skewed to basic and acidic residues over residues 408–433 (HGRE…DKAL), 442–455 (TGES…DKIA), and 468–477 (ASRDGKKEKG). Residues 510 to 521 (RSSSTTSSGSSK) show a composition bias toward low complexity.

This sequence belongs to the GARIN family. Interacts (via N-terminus) with RAB2B (in GTP-bound form).

The protein localises to the golgi apparatus. Its function is as follows. RAB2B effector protein required for the compacted Golgi morphology, probably through interaction with small GTPase RAB2B. In Macaca fascicularis (Crab-eating macaque), this protein is Golgi-associated RAB2 interactor protein 4 (GARIN4).